The sequence spans 349 residues: Ribosomal RNA large subunit methyltransferase M (349 aa).

S-adenosyl-L-methionine contacts are provided by residues S183, 216 to 219, D235, D255, and D271; that span reads APGG. The Proton acceptor role is filled by K300.

This sequence belongs to the class I-like SAM-binding methyltransferase superfamily. RNA methyltransferase RlmE family. RlmM subfamily. Monomer.

It localises to the cytoplasm. It catalyses the reaction cytidine(2498) in 23S rRNA + S-adenosyl-L-methionine = 2'-O-methylcytidine(2498) in 23S rRNA + S-adenosyl-L-homocysteine + H(+). Functionally, catalyzes the 2'-O-methylation at nucleotide C2498 in 23S rRNA. The protein is Ribosomal RNA large subunit methyltransferase M of Stutzerimonas stutzeri (strain A1501) (Pseudomonas stutzeri).